A 76-amino-acid polypeptide reads, in one-letter code: Kappa-actitoxin-Avd4l (76 aa).

The first 19 residues, 1 to 19 (MNKALFLCLVVLCAAVVFA), serve as a signal peptide directing secretion. Residues 20 to 31 (AEDLQKAKHAPF) constitute a propeptide that is removed on maturation. Intrachain disulfides connect cysteine 37-cysteine 72, cysteine 39-cysteine 65, and cysteine 55-cysteine 73.

It belongs to the sea anemone type 3 (BDS) potassium channel toxin family. As to expression, weakly expressed in the ectodermal tissue from the distal and proximal tentacles, body wall, and oral disk.

It localises to the secreted. It is found in the nematocyst. Blocks Kv3 voltage-gated potassium channels. Reduces blood pressure. This chain is Kappa-actitoxin-Avd4l, found in Anemonia viridis (Snakelocks anemone).